Reading from the N-terminus, the 496-residue chain is Probable cytosol aminopeptidase (496 aa).

Residues Lys258 and Asp263 each coordinate Mn(2+). Lys270 is a catalytic residue. Mn(2+)-binding residues include Asp281, Asp340, and Glu342. The active site involves Arg344.

The protein belongs to the peptidase M17 family. Mn(2+) is required as a cofactor.

The protein resides in the cytoplasm. It catalyses the reaction Release of an N-terminal amino acid, Xaa-|-Yaa-, in which Xaa is preferably Leu, but may be other amino acids including Pro although not Arg or Lys, and Yaa may be Pro. Amino acid amides and methyl esters are also readily hydrolyzed, but rates on arylamides are exceedingly low.. It carries out the reaction Release of an N-terminal amino acid, preferentially leucine, but not glutamic or aspartic acids.. Presumably involved in the processing and regular turnover of intracellular proteins. Catalyzes the removal of unsubstituted N-terminal amino acids from various peptides. The chain is Probable cytosol aminopeptidase from Helicobacter pylori (strain Shi470).